Consider the following 596-residue polypeptide: RNA-binding protein involved in heterochromatin assembly dri1 (596 aa).

Phosphoserine is present on Ser176. The RRM domain maps to 236-314 (KIVHVAGLTN…RMLEIIPSST (79 aa)). The RanBP2-type 1 zinc finger occupies 335 to 364 (RPGDWNCPMCGFSNFQRRTSCFRCSFPGPT). At Ser429 the chain carries Phosphoserine. 2 consecutive RanBP2-type zinc fingers follow at residues 437–468 (RAGD…SRAT) and 552–580 (DQGD…PHYS).

In terms of assembly, interacts with dpb4. Interacts with chp1.

It is found in the chromosome. The protein resides in the nucleus. Its subcellular location is the cytoplasm. It localises to the cytoplasmic granule. Mediates heterochromatin assembly by promoting RNAi-mediated heterochromatin silencing and histone deacetylation. Binds pericetromeric transcripts and recruits the RNA-induced transcriptional silencing (RITS) complex to heterochromatin. Recruits sir2 to chromatin to promote deacetylation of 'Lys-9' of histone H3. Involved in bipolar spindle assembly during mitosis. Required for proper localization of kinesin-14/Klp2 on the spindle microtubules. The protein is RNA-binding protein involved in heterochromatin assembly dri1 of Schizosaccharomyces pombe (strain 972 / ATCC 24843) (Fission yeast).